We begin with the raw amino-acid sequence, 288 residues long: Purine nucleoside phosphorylase (288 aa).

A phosphate-binding site is contributed by 65–66; it reads RN. A substrate-binding site is contributed by methionine 201. Threonine 202 contributes to the phosphate binding site.

Belongs to the PNP/MTAP phosphorylase family. MTAP subfamily. As to quaternary structure, homotrimer.

It is found in the cytoplasm. Its subcellular location is the nucleus. It carries out the reaction a purine D-ribonucleoside + phosphate = a purine nucleobase + alpha-D-ribose 1-phosphate. The protein operates within purine metabolism; purine nucleoside salvage. Purine nucleoside phosphorylase involved in purine salvage. The protein is Purine nucleoside phosphorylase of Drosophila pseudoobscura pseudoobscura (Fruit fly).